Consider the following 154-residue polypeptide: uncharacterized protein (154 aa).

Zn(2+) is bound by residues C4, C7, C16, C19, C24, C28, H32, and C36. The HIT-type zinc-finger motif lies at 4–36 (CSICNESEIKYKCPKCSFPYCSLPCWKIHQSQC).

This is an uncharacterized protein from Schizosaccharomyces pombe (strain 972 / ATCC 24843) (Fission yeast).